Consider the following 348-residue polypeptide: GTP 3',8-cyclase (348 aa).

One can recognise a Radical SAM core domain in the interval Pro-24 to Asp-242. A GTP-binding site is contributed by Arg-33. The [4Fe-4S] cluster site is built by Cys-40 and Cys-44. Tyr-46 lines the S-adenosyl-L-methionine pocket. Position 47 (Cys-47) interacts with [4Fe-4S] cluster. Arg-82 contributes to the GTP binding site. An S-adenosyl-L-methionine-binding site is contributed by Gly-86. Residue Thr-115 coordinates GTP. Residue Ser-139 coordinates S-adenosyl-L-methionine. Lys-175 contacts GTP. Met-209 provides a ligand contact to S-adenosyl-L-methionine. [4Fe-4S] cluster contacts are provided by Cys-272 and Cys-275. Arg-277 to Arg-279 serves as a coordination point for GTP. Residue Cys-289 coordinates [4Fe-4S] cluster.

It belongs to the radical SAM superfamily. MoaA family. Monomer and homodimer. The cofactor is [4Fe-4S] cluster.

It catalyses the reaction GTP + AH2 + S-adenosyl-L-methionine = (8S)-3',8-cyclo-7,8-dihydroguanosine 5'-triphosphate + 5'-deoxyadenosine + L-methionine + A + H(+). It functions in the pathway cofactor biosynthesis; molybdopterin biosynthesis. Catalyzes the cyclization of GTP to (8S)-3',8-cyclo-7,8-dihydroguanosine 5'-triphosphate. In Rhizobium leguminosarum bv. trifolii (strain WSM2304), this protein is GTP 3',8-cyclase.